Here is a 119-residue protein sequence, read N- to C-terminus: Holo-[acyl-carrier-protein] synthase (119 aa).

Mg(2+)-binding residues include Asp-8 and Glu-59.

The protein belongs to the P-Pant transferase superfamily. AcpS family. Requires Mg(2+) as cofactor.

The protein resides in the cytoplasm. It carries out the reaction apo-[ACP] + CoA = holo-[ACP] + adenosine 3',5'-bisphosphate + H(+). Functionally, transfers the 4'-phosphopantetheine moiety from coenzyme A to a Ser of acyl-carrier-protein. This is Holo-[acyl-carrier-protein] synthase from Streptococcus agalactiae serotype Ia (strain ATCC 27591 / A909 / CDC SS700).